A 254-amino-acid chain; its full sequence is 30 kDa major early protein (254 aa).

This is 30 kDa major early protein from Human cytomegalovirus (strain Eisenhardt) (HHV-5).